We begin with the raw amino-acid sequence, 201 residues long: tRNA (guanine-N(7)-)-methyltransferase (201 aa).

S-adenosyl-L-methionine-binding residues include E33, E58, D85, and D108. Residue D108 is part of the active site. Substrate contacts are provided by K112 and D144.

The protein belongs to the class I-like SAM-binding methyltransferase superfamily. TrmB family.

It catalyses the reaction guanosine(46) in tRNA + S-adenosyl-L-methionine = N(7)-methylguanosine(46) in tRNA + S-adenosyl-L-homocysteine. The protein operates within tRNA modification; N(7)-methylguanine-tRNA biosynthesis. Its function is as follows. Catalyzes the formation of N(7)-methylguanine at position 46 (m7G46) in tRNA. The sequence is that of tRNA (guanine-N(7)-)-methyltransferase from Anaeromyxobacter dehalogenans (strain 2CP-C).